Here is a 194-residue protein sequence, read N- to C-terminus: Fe/S biogenesis protein NfuA (194 aa).

[4Fe-4S] cluster is bound by residues C152 and C155.

The protein belongs to the NfuA family. In terms of assembly, homodimer. [4Fe-4S] cluster serves as cofactor.

In terms of biological role, involved in iron-sulfur cluster biogenesis. Binds a 4Fe-4S cluster, can transfer this cluster to apoproteins, and thereby intervenes in the maturation of Fe/S proteins. Could also act as a scaffold/chaperone for damaged Fe/S proteins. The sequence is that of Fe/S biogenesis protein NfuA from Pseudomonas fluorescens (strain SBW25).